A 130-amino-acid chain; its full sequence is uncharacterized protein (130 aa).

Residues 76 to 102 (RKCKNGPSPNKRGSASGCSRRGGGRGS) form a disordered region.

This is an uncharacterized protein from Saccharomyces cerevisiae (strain ATCC 204508 / S288c) (Baker's yeast).